Consider the following 396-residue polypeptide: 1-deoxy-D-xylulose 5-phosphate reductoisomerase (396 aa).

Threonine 10, glycine 11, serine 12, isoleucine 13, glycine 36, lysine 37, asparagine 38, and asparagine 124 together coordinate NADPH. Lysine 125 serves as a coordination point for 1-deoxy-D-xylulose 5-phosphate. Glutamate 126 lines the NADPH pocket. Aspartate 150 contacts Mn(2+). Residues serine 151, glutamate 152, serine 186, and histidine 209 each coordinate 1-deoxy-D-xylulose 5-phosphate. Glutamate 152 serves as a coordination point for Mn(2+). Glycine 215 provides a ligand contact to NADPH. Positions 222, 227, 228, and 231 each coordinate 1-deoxy-D-xylulose 5-phosphate. Residue glutamate 231 participates in Mn(2+) binding.

It belongs to the DXR family. The cofactor is Mg(2+). It depends on Mn(2+) as a cofactor.

It catalyses the reaction 2-C-methyl-D-erythritol 4-phosphate + NADP(+) = 1-deoxy-D-xylulose 5-phosphate + NADPH + H(+). The protein operates within isoprenoid biosynthesis; isopentenyl diphosphate biosynthesis via DXP pathway; isopentenyl diphosphate from 1-deoxy-D-xylulose 5-phosphate: step 1/6. Functionally, catalyzes the NADPH-dependent rearrangement and reduction of 1-deoxy-D-xylulose-5-phosphate (DXP) to 2-C-methyl-D-erythritol 4-phosphate (MEP). The sequence is that of 1-deoxy-D-xylulose 5-phosphate reductoisomerase from Actinobacillus pleuropneumoniae serotype 3 (strain JL03).